A 734-amino-acid chain; its full sequence is Methionine--tRNA ligase (734 aa).

Residues 12–22 (PYVNNIPHLGN) carry the 'HIGH' region motif. 4 residues coordinate Zn(2+): cysteine 143, cysteine 146, cysteine 155, and cysteine 158. The 'KMSKS' region motif lies at 330-334 (KFSKS). Lysine 333 contacts ATP. The region spanning 570 to 675 (FREKVLLRVV…QNPIAGERII (106 aa)) is the tRNA-binding domain.

Belongs to the class-I aminoacyl-tRNA synthetase family. MetG type 1 subfamily. In terms of assembly, homodimer. Zn(2+) is required as a cofactor.

The protein localises to the cytoplasm. It carries out the reaction tRNA(Met) + L-methionine + ATP = L-methionyl-tRNA(Met) + AMP + diphosphate. Its function is as follows. Is required not only for elongation of protein synthesis but also for the initiation of all mRNA translation through initiator tRNA(fMet) aminoacylation. This is Methionine--tRNA ligase from Borreliella burgdorferi (strain ZS7) (Borrelia burgdorferi).